Consider the following 417-residue polypeptide: Sulfite reductase, dissimilatory-type subunit alpha (417 aa).

Positions 170, 176, 214, 218, 264, 284, 287, and 290 each coordinate [4Fe-4S] cluster. C218 contacts siroheme.

Requires [4Fe-4S] cluster as cofactor. It depends on siroheme as a cofactor.

The enzyme catalyses [DsrC protein]-trisulfide + NAD(+) + 3 H2O = [DsrC protein]-dithiol + sulfite + NADH + 3 H(+). Functionally, catalyzes the reduction of sulfite to sulfide. This is the terminal oxidation reaction in sulfate respiration. This Allochromatium vinosum (strain ATCC 17899 / DSM 180 / NBRC 103801 / NCIMB 10441 / D) (Chromatium vinosum) protein is Sulfite reductase, dissimilatory-type subunit alpha (dsrA).